Reading from the N-terminus, the 466-residue chain is Chromosomal replication initiator protein DnaA (466 aa).

A domain I, interacts with DnaA modulators region spans residues 1 to 77; that stretch reads MSQEIWADVL…GAEHPQVEFQ (77 aa). Residues 77–121 form a domain II region; it reads QVLPAAQDALLLPNDPPPAPEAAAPTPKTKAAPTPPPSTPGDNRK. A disordered region spans residues 87–122; sequence LLPNDPPPAPEAAAPTPKTKAAPTPPPSTPGDNRKT. Positions 97–108 are enriched in low complexity; sequence EAAAPTPKTKAA. The interval 122 to 338 is domain III, AAA+ region; it reads TLNPKYTFEN…GALMRVVAFA (217 aa). ATP-binding residues include G166, G168, K169, and T170. Positions 339 to 466 are domain IV, binds dsDNA; it reads SLNNVPFSRA…GKEEEEEVGA (128 aa).

It belongs to the DnaA family. In terms of assembly, oligomerizes as a right-handed, spiral filament on DNA at oriC.

It localises to the cytoplasm. Plays an essential role in the initiation and regulation of chromosomal replication. ATP-DnaA binds to the origin of replication (oriC) to initiate formation of the DNA replication initiation complex once per cell cycle. Binds the DnaA box (a 9 base pair repeat at the origin) and separates the double-stranded (ds)DNA. Forms a right-handed helical filament on oriC DNA; dsDNA binds to the exterior of the filament while single-stranded (ss)DNA is stabiized in the filament's interior. The ATP-DnaA-oriC complex binds and stabilizes one strand of the AT-rich DNA unwinding element (DUE), permitting loading of DNA polymerase. After initiation quickly degrades to an ADP-DnaA complex that is not apt for DNA replication. Binds acidic phospholipids. In terms of biological role, strand separation requires the DnaA boxes and adjacent DnaA-trio motifs but works equally well with ADP or ATP. The chain is Chromosomal replication initiator protein DnaA from Deinococcus radiodurans (strain ATCC 13939 / DSM 20539 / JCM 16871 / CCUG 27074 / LMG 4051 / NBRC 15346 / NCIMB 9279 / VKM B-1422 / R1).